The sequence spans 438 residues: MHTEDNGLKKEIGLLFALTLVIGTIIGSGVFMKPGAVLAYSGDSKMALFAWLLGGILTLAGGLTIAEIGTQIPKTGGLYTYLEEVYGEFWGFLCGWVQIIIYGPAIIGALGLYFGSLMANLFGWGSGLSKVIGIIAVLFLCVINIIGTKYGGFVQTLTTIGKLIPIACIIVFGLWKGDQHIFTAVNESISDMNFGAAILATLFAYDGWILLAALGGEMKNPEKLLPRAMTGGLLIVTAIYIFINFALLHILSANEIVTLGENATSTAATMLFGSIGGKLISVGIIVSIFGCLNGKVLSFPRVSFAMAERKQLPFAEKLSHVHPSFRTPWIAISFQIALALIMMLISNPDKLSEISIFMIYIFYVMAFFAVFILRKRAKGEKRAYSVPLYPFMPILAIAGSFFVLGSTLITDTMSCGLSILIGLAGLPVYYGMKKRKAS.

The Cytoplasmic segment spans residues 1 to 11 (MHTEDNGLKKE). The chain crosses the membrane as a helical span at residues 12-32 (IGLLFALTLVIGTIIGSGVFM). Residues 33–45 (KPGAVLAYSGDSK) lie on the Extracellular side of the membrane. Residues 46–66 (MALFAWLLGGILTLAGGLTIA) form a helical membrane-spanning segment. Over 67-98 (EIGTQIPKTGGLYTYLEEVYGEFWGFLCGWVQ) the chain is Cytoplasmic. A helical transmembrane segment spans residues 99 to 119 (IIIYGPAIIGALGLYFGSLMA). Residues 120–126 (NLFGWGS) are Extracellular-facing. A helical transmembrane segment spans residues 127 to 147 (GLSKVIGIIAVLFLCVINIIG). The Cytoplasmic segment spans residues 148 to 151 (TKYG). A helical membrane pass occupies residues 152 to 172 (GFVQTLTTIGKLIPIACIIVF). The Extracellular segment spans residues 173-193 (GLWKGDQHIFTAVNESISDMN). Residues 194 to 214 (FGAAILATLFAYDGWILLAAL) form a helical membrane-spanning segment. Residues 215 to 230 (GGEMKNPEKLLPRAMT) are Cytoplasmic-facing. The helical transmembrane segment at 231–251 (GGLLIVTAIYIFINFALLHIL) threads the bilayer. At 252–269 (SANEIVTLGENATSTAAT) the chain is on the extracellular side. The helical transmembrane segment at 270–290 (MLFGSIGGKLISVGIIVSIFG) threads the bilayer. Residues 291–327 (CLNGKVLSFPRVSFAMAERKQLPFAEKLSHVHPSFRT) are Cytoplasmic-facing. A helical transmembrane segment spans residues 328-348 (PWIAISFQIALALIMMLISNP). The Extracellular segment spans residues 349-352 (DKLS). Residues 353 to 373 (EISIFMIYIFYVMAFFAVFIL) form a helical membrane-spanning segment. Topologically, residues 374 to 388 (RKRAKGEKRAYSVPL) are cytoplasmic. A helical transmembrane segment spans residues 389–409 (YPFMPILAIAGSFFVLGSTLI). The Extracellular segment spans residues 410 to 411 (TD). Residues 412–432 (TMSCGLSILIGLAGLPVYYGM) form a helical membrane-spanning segment. At 433–438 (KKRKAS) the chain is on the cytoplasmic side.

It belongs to the amino acid-polyamine-organocation (APC) superfamily. L-type amino acid transporter (LAT) (TC 2.A.3.8) family. Monomer.

The protein localises to the cell membrane. Exhibits an obligate exchange activity for serine, threonine and aromatic amino acids. The sequence is that of Serine/threonine exchanger SteT (steT) from Bacillus subtilis (strain 168).